The chain runs to 431 residues: STE20-related kinase adapter protein alpha (431 aa).

Ser-2 and Ser-46 each carry phosphoserine. 2 disordered regions span residues 32-52 and 314-344; these read EQPP…SIAS and PSRS…SHPY. In terms of domain architecture, Protein kinase spans 69–379; sequence YELLTIIGKG…ASTLLNHSFF (311 aa). The residue at position 419 (Thr-419) is a Phosphothreonine; by LKB1.

The protein belongs to the protein kinase superfamily. STE Ser/Thr protein kinase family. STE20 subfamily. Component of a trimeric complex composed of STK11/LKB1, STRAD (STRADA or STRADB) and CAB39/MO25 (CAB39/MO25alpha or CAB39L/MO25beta): the complex tethers STK11/LKB1 in the cytoplasm and stimulates its catalytic activity.

The protein localises to the nucleus. The protein resides in the cytoplasm. Its function is as follows. Pseudokinase which, in complex with CAB39/MO25 (CAB39/MO25alpha or CAB39L/MO25beta), binds to and activates STK11/LKB1. Adopts a closed conformation typical of active protein kinases and binds STK11/LKB1 as a pseudosubstrate, promoting conformational change of STK11/LKB1 in an active conformation. The sequence is that of STE20-related kinase adapter protein alpha (Strada) from Mus musculus (Mouse).